The sequence spans 1214 residues: Zinc finger E-box-binding homeobox 2 (1214 aa).

The tract at residues 1-101 (MKQPIMADGP…GVEHPWHNNE (101 aa)) is disordered. The segment covering 12–24 (CKRRKQANPRRKN) has biased composition (basic residues). Over residues 57–74 (DQETSPASVPNHESSPHV) the composition is skewed to polar residues. Over residues 89–98 (REGGVEHPWH) the composition is skewed to basic and acidic residues. Residue Ser142 is modified to Phosphoserine. C2H2-type zinc fingers lie at residues 211-234 (LTCP…KYRH), 241-263 (FSCP…MVTH), and 282-304 (FKCT…LRIH). The segment at 310 to 334 (YECPNCKKRFSHSGSYSSHISSKKC) adopts a C2H2-type 4; atypical zinc-finger fold. 3 positions are modified to phosphoserine: Ser356, Ser360, and Ser364. Lys377 is subject to N6-acetyllysine. Lys391 participates in a covalent cross-link: Glycyl lysine isopeptide (Lys-Gly) (interchain with G-Cter in SUMO); alternate. Lys391 participates in a covalent cross-link: Glycyl lysine isopeptide (Lys-Gly) (interchain with G-Cter in SUMO2); alternate. The interval 437-487 (QHLGVGMEAPLLGFPTMNSNLSEVQKVLQIVDNTVSRQKMDCKAEEISKLK) is SMAD-MH2 binding domain. Glycyl lysine isopeptide (Lys-Gly) (interchain with G-Cter in SUMO2) cross-links involve residues Lys479 and Lys555. The C2H2-type 5; atypical zinc finger occupies 581–605 (FSCQFCKESFPGPIPLHQHERYLCK). Glycyl lysine isopeptide (Lys-Gly) (interchain with G-Cter in SUMO2) cross-links involve residues Lys611 and Lys632. Positions 644 to 703 (GMTSPINPYKDHMSVLKAYYAMNMEPNSDELLKISIAVGLPQEFVKEWFEQRKVYQYSNS) form a DNA-binding region, homeobox; atypical. Ser647 bears the Phosphoserine mark. Over residues 702-715 (NSRSPSLERSSKPL) the composition is skewed to low complexity. Disordered stretches follow at residues 702–740 (NSRS…DSIT), 771–810 (PVEK…SSEE), and 832–857 (ATKN…ENSD). Residue Lys713 forms a Glycyl lysine isopeptide (Lys-Gly) (interchain with G-Cter in SUMO2) linkage. Ser731 and Ser780 each carry phosphoserine. 2 stretches are compositionally biased toward low complexity: residues 780–808 (SNTP…SFSS) and 840–854 (SSIS…SSSE). Thr782 bears the Phosphothreonine mark. The residue at position 784 (Ser784) is a Phosphoserine. Residue Lys866 forms a Glycyl lysine isopeptide (Lys-Gly) (interchain with G-Cter in SUMO); alternate linkage. Lys866 participates in a covalent cross-link: Glycyl lysine isopeptide (Lys-Gly) (interchain with G-Cter in SUMO2); alternate. C2H2-type zinc fingers lie at residues 999-1021 (YACD…KYEH) and 1027-1049 (HQCQ…SRLH). The C2H2-type 8; atypical zinc finger occupies 1055-1076 (YQCDKCGKRFSHSGSYSQHMNH). Positions 1117–1214 (TPQGYSDSEE…HEEDNMEDGM (98 aa)) are disordered. 2 positions are modified to phosphoserine: Ser1122 and Ser1124. Residues 1127–1155 (RESMPRDGESEKEHEKEGEDGYGKLGRQD) show a composition bias toward basic and acidic residues. Over residues 1156–1167 (GDEEFEEEEEES) the composition is skewed to acidic residues. Composition is skewed to basic and acidic residues over residues 1168–1179 (ENKSMDTDPETI) and 1186–1205 (GDHS…KSDH). Position 1203 is a phosphoserine (Ser1203).

It belongs to the delta-EF1/ZFH-1 C2H2-type zinc-finger family. As to quaternary structure, binds activated SMAD1, activated SMAD2 and activated SMAD3; binding with SMAD4 is not detected. Interacts with CBX4 and CTBP1. In terms of processing, sumoylation on Lys-391 and Lys-866 is promoted by the E3 SUMO-protein ligase CBX4, and impairs interaction with CTBP1 and transcription repression activity.

The protein resides in the nucleus. Its subcellular location is the chromosome. Its function is as follows. Transcriptional inhibitor that binds to DNA sequence 5'-CACCT-3' in different promoters. Represses transcription of E-cadherin. Represses expression of MEOX2. The chain is Zinc finger E-box-binding homeobox 2 from Homo sapiens (Human).